A 555-amino-acid chain; its full sequence is Aerobic glycerol-3-phosphate dehydrogenase (555 aa).

24-52 (DLFIIGGGITGAGTALDAASRGMKVALSE) contributes to the FAD binding site.

This sequence belongs to the FAD-dependent glycerol-3-phosphate dehydrogenase family. The cofactor is FAD.

The protein localises to the cytoplasm. It carries out the reaction a quinone + sn-glycerol 3-phosphate = dihydroxyacetone phosphate + a quinol. It functions in the pathway polyol metabolism; glycerol degradation via glycerol kinase pathway; glycerone phosphate from sn-glycerol 3-phosphate (aerobic route): step 1/1. This Bacillus subtilis (strain 168) protein is Aerobic glycerol-3-phosphate dehydrogenase (glpD).